Reading from the N-terminus, the 202-residue chain is LexA repressor (202 aa).

A DNA-binding region (H-T-H motif) is located at residues 29 to 49 (VREICTAVGLKSTSTVHSYLE). Catalysis depends on for autocatalytic cleavage activity residues serine 125 and lysine 162.

This sequence belongs to the peptidase S24 family. In terms of assembly, homodimer.

It catalyses the reaction Hydrolysis of Ala-|-Gly bond in repressor LexA.. Functionally, represses a number of genes involved in the response to DNA damage (SOS response), including recA and lexA. In the presence of single-stranded DNA, RecA interacts with LexA causing an autocatalytic cleavage which disrupts the DNA-binding part of LexA, leading to derepression of the SOS regulon and eventually DNA repair. This Clostridium kluyveri (strain NBRC 12016) protein is LexA repressor.